The primary structure comprises 743 residues: Inhibitor of nuclear factor kappa-B kinase subunit alpha (743 aa).

In terms of domain architecture, Protein kinase spans W15–V300. ATP is bound by residues L21 to V29 and K44. The Proton acceptor role is filled by D144. The leucine-zipper stretch occupies residues L453–L474. The interval L736–L741 is NEMO-binding.

It belongs to the protein kinase superfamily. Ser/Thr protein kinase family. I-kappa-B kinase subfamily.

The protein localises to the cytoplasm. Its subcellular location is the nucleus. It catalyses the reaction L-seryl-[I-kappa-B protein] + ATP = O-phospho-L-seryl-[I-kappa-B protein] + ADP + H(+). Activated when phosphorylated and inactivated when dephosphorylated. In terms of biological role, phosphorylates inhibitors of NF-kappa-B thus leading to the dissociation of the inhibitor/NF-kappa-B complex and ultimately the degradation of the inhibitor. Phosphorylates 'Ser-10' of histone H3 at NF-kappa-B-regulated promoters during inflammatory responses triggered by cytokines. This Xenopus tropicalis (Western clawed frog) protein is Inhibitor of nuclear factor kappa-B kinase subunit alpha (chuk).